The chain runs to 404 residues: MEELGLKSTFPYEYGSDFTMIRTEMLNTTKSETTILFSNIKSILAIIWKYSFTFLRSFSDSIKLIIDDVVTIGSRNFAERLQIEAKKNNDQEDIWASTIILGVIIGYLISSIKRKNTFPIMPTSSPKIDDCRFKTGDTISIVINFNEDCLNNRSDVTEERNYEESTVLHSKESVLSIGRQNMVTLNQSDENFTYGNFDEYDLLTKDYTTEVLTRSPGSNPEFKAVVNNTLLDSANETPFKGIEKSINETMVKVPMGCDVSLSHYGRQYAPGNISIMRSFTARDNTKSVSREIRDICKSFLIIKSQFGDELFLTMFMEKPVFFDNNIPIEITGAYREKRERLDEVIHKDLIRYDEVQNLTRIRNLLRVKSQKICSRRHNSSVPTKKLLVNDKGATSILLWYSNYS.

The next 2 helical transmembrane spans lie at 35–55 (ILFSNIKSILAIIWKYSFTFL) and 92–112 (EDIWASTIILGVIIGYLISSI).

It is found in the membrane. This is an uncharacterized protein from Saccharomyces cerevisiae (strain ATCC 204508 / S288c) (Baker's yeast).